A 309-amino-acid polypeptide reads, in one-letter code: Taste receptor type 2 member 8 (309 aa).

Residues 1 to 7 (MFSPADN) lie on the Extracellular side of the membrane. Residues 8 to 28 (IFIILITGEFILGILGNGYIA) form a helical membrane-spanning segment. At 29–50 (LVNWIDWIKKKKISTIDYILTN) the chain is on the cytoplasmic side. Residues 51-71 (LVISRICLISVMVVNGIVIAV) form a helical membrane-spanning segment. The Extracellular segment spans residues 72-82 (YPDVYTKSKLQ). The chain crosses the membrane as a helical span at residues 83–103 (IAICTFWTFANYLNMWITTCL). Over 104–131 (NVFYFLKIANSSHPLFLWLKQKIDMVVR) the chain is Cytoplasmic. The helical transmembrane segment at 132–152 (WILLGCFAISLLVSLIAAIVL) threads the bilayer. Residues 153–184 (SYDYRFHAIAKHKRNITEMFHVSKRPYFEPLT) are Extracellular-facing. An N-linked (GlcNAc...) asparagine glycan is attached at Asn167. Residues 185 to 205 (LFNLFAIVPFIVSLISFFLLV) traverse the membrane as a helical segment. Topologically, residues 206-239 (RSLWRHTKQIKLYATGGRDPSTEVHVRAIKTMTS) are cytoplasmic. The helical transmembrane segment at 240–260 (FIFLFFLYYISSILVTFSYLM) threads the bilayer. Topologically, residues 261-266 (TKYKLA) are extracellular. A helical transmembrane segment spans residues 267–287 (VEFGEIVAILYPLGHSLILIV). The Cytoplasmic portion of the chain corresponds to 288–309 (LNNKLRQTFVRMLTCRKIACVI).

It belongs to the G-protein coupled receptor T2R family.

The protein resides in the membrane. In terms of biological role, receptor that may play a role in the perception of bitterness and is gustducin-linked. May play a role in sensing the chemical composition of the gastrointestinal content. The activity of this receptor may stimulate alpha gustducin, mediate PLC-beta-2 activation and lead to the gating of TRPM5. This is Taste receptor type 2 member 8 (TAS2R8) from Gorilla gorilla gorilla (Western lowland gorilla).